We begin with the raw amino-acid sequence, 447 residues long: Guanine nucleotide-binding protein alpha-1 subunit (447 aa).

Residue Gly2 is the site of N-myristoyl glycine attachment. A lipid anchor (S-palmitoyl cysteine) is attached at Cys3. The G-alpha domain maps to 40–447; the sequence is NEVKLLLLGA…QQNLKKSGIL (408 aa). Positions 43–56 are G1 motif; the sequence is KLLLLGAGESGKST. 13 residues coordinate GTP: Glu51, Ser52, Gly53, Lys54, Ser55, Thr56, Leu269, Thr275, Gly297, Asn363, Lys364, Asp366, and Ala419. Residue Ser55 coordinates Mg(2+). The G2 motif stretch occupies residues 267-275; it reads DILKGRIKT. Thr275 serves as a coordination point for Mg(2+). The G3 motif stretch occupies residues 290 to 299; that stretch reads FKVYDAGGQR. The G4 motif stretch occupies residues 359 to 366; sequence ILFLNKVD. The G5 motif stretch occupies residues 417 to 422; sequence TCATDT.

The protein belongs to the G-alpha family. G proteins are composed of 3 units; alpha, beta and gamma. The alpha chain contains the guanine nucleotide binding site. Mg(2+) serves as cofactor.

Functionally, guanine nucleotide-binding proteins (G proteins) are involved as modulators or transducers in various transmembrane signaling systems. This protein is involved in the mating response pathway. This is Guanine nucleotide-binding protein alpha-1 subunit (GPA1) from Kluyveromyces lactis (strain ATCC 8585 / CBS 2359 / DSM 70799 / NBRC 1267 / NRRL Y-1140 / WM37) (Yeast).